Here is a 129-residue protein sequence, read N- to C-terminus: D-ribose pyranase (129 aa).

The active-site Proton donor is H20. Substrate-binding positions include D28, H96, and 118-120 (YAN).

This sequence belongs to the RbsD / FucU family. RbsD subfamily. Homodecamer.

The protein resides in the cytoplasm. The catalysed reaction is beta-D-ribopyranose = beta-D-ribofuranose. Its pathway is carbohydrate metabolism; D-ribose degradation; D-ribose 5-phosphate from beta-D-ribopyranose: step 1/2. Its function is as follows. Catalyzes the interconversion of beta-pyran and beta-furan forms of D-ribose. This is D-ribose pyranase from Halalkalibacterium halodurans (strain ATCC BAA-125 / DSM 18197 / FERM 7344 / JCM 9153 / C-125) (Bacillus halodurans).